A 113-amino-acid polypeptide reads, in one-letter code: Putative pterin-4-alpha-carbinolamine dehydratase (113 aa).

Belongs to the pterin-4-alpha-carbinolamine dehydratase family.

The catalysed reaction is (4aS,6R)-4a-hydroxy-L-erythro-5,6,7,8-tetrahydrobiopterin = (6R)-L-erythro-6,7-dihydrobiopterin + H2O. This chain is Putative pterin-4-alpha-carbinolamine dehydratase, found in Pelodictyon phaeoclathratiforme (strain DSM 5477 / BU-1).